Reading from the N-terminus, the 739-residue chain is Probable beta-glucosidase L (739 aa).

The N-terminal stretch at 1-17 (MQNLFLSLLAAAVTVHA) is a signal peptide. N-linked (GlcNAc...) asparagine glycosylation occurs at N224. D252 is a catalytic residue. N398 is a glycosylation site (N-linked (GlcNAc...) asparagine).

The protein belongs to the glycosyl hydrolase 3 family.

It localises to the secreted. It carries out the reaction Hydrolysis of terminal, non-reducing beta-D-glucosyl residues with release of beta-D-glucose.. Its pathway is glycan metabolism; cellulose degradation. In terms of biological role, beta-glucosidases are one of a number of cellulolytic enzymes involved in the degradation of cellulosic biomass. Catalyzes the last step releasing glucose from the inhibitory cellobiose. This is Probable beta-glucosidase L (bglL) from Neosartorya fischeri (strain ATCC 1020 / DSM 3700 / CBS 544.65 / FGSC A1164 / JCM 1740 / NRRL 181 / WB 181) (Aspergillus fischerianus).